The primary structure comprises 277 residues: Putative acetylornithine deacetylase (277 aa).

The catalysed reaction is N(2)-acetyl-L-ornithine + H2O = L-ornithine + acetate. The protein operates within amino-acid biosynthesis; L-arginine biosynthesis; L-ornithine from N(2)-acetyl-L-ornithine (linear): step 1/1. In Leptospira biflexa, this protein is Putative acetylornithine deacetylase (argE).